The following is a 331-amino-acid chain: Fructose-1,6-bisphosphatase class 1 2 (331 aa).

Mg(2+) is bound by residues Glu91, Asp112, Leu114, and Asp115. Substrate-binding positions include 115–118, Asn207, Tyr238, and Lys268; that span reads DGSS. Mg(2+) is bound at residue Glu274.

The protein belongs to the FBPase class 1 family. In terms of assembly, homotetramer. The cofactor is Mg(2+).

It is found in the cytoplasm. It catalyses the reaction beta-D-fructose 1,6-bisphosphate + H2O = beta-D-fructose 6-phosphate + phosphate. The protein operates within carbohydrate biosynthesis; Calvin cycle. This Acaryochloris marina (strain MBIC 11017) protein is Fructose-1,6-bisphosphatase class 1 2.